The following is a 326-amino-acid chain: tRNA N6-adenosine threonylcarbamoyltransferase (326 aa).

Fe cation is bound by residues His111 and His115. Substrate-binding positions include 134–138, Asp167, Gly180, Asp184, and Asn268; that span reads TVSGG. Position 293 (Asp293) interacts with Fe cation.

It belongs to the KAE1 / TsaD family. It depends on Fe(2+) as a cofactor.

The protein resides in the cytoplasm. It catalyses the reaction L-threonylcarbamoyladenylate + adenosine(37) in tRNA = N(6)-L-threonylcarbamoyladenosine(37) in tRNA + AMP + H(+). In terms of biological role, required for the formation of a threonylcarbamoyl group on adenosine at position 37 (t(6)A37) in tRNAs that read codons beginning with adenine. Is involved in the transfer of the threonylcarbamoyl moiety of threonylcarbamoyl-AMP (TC-AMP) to the N6 group of A37, together with TsaE and TsaB. TsaD likely plays a direct catalytic role in this reaction. The chain is tRNA N6-adenosine threonylcarbamoyltransferase from Dehalococcoides mccartyi (strain ATCC BAA-2100 / JCM 16839 / KCTC 5957 / BAV1).